We begin with the raw amino-acid sequence, 390 residues long: Queuine tRNA-ribosyltransferase (390 aa).

The Proton acceptor role is filled by Asp90. Substrate is bound by residues 90–94 (DSGGF), Asp144, Gln197, and Gly224. The RNA binding stretch occupies residues 255–261 (GVGTPED). The active-site Nucleophile is the Asp274. The interval 279–283 (TRNAR) is RNA binding; important for wobble base 34 recognition. Zn(2+)-binding residues include Cys312, Cys314, Cys317, and His354.

This sequence belongs to the queuine tRNA-ribosyltransferase family. In terms of assembly, homodimer. Within each dimer, one monomer is responsible for RNA recognition and catalysis, while the other monomer binds to the replacement base PreQ1. Requires Zn(2+) as cofactor.

The enzyme catalyses 7-aminomethyl-7-carbaguanine + guanosine(34) in tRNA = 7-aminomethyl-7-carbaguanosine(34) in tRNA + guanine. It functions in the pathway tRNA modification; tRNA-queuosine biosynthesis. Its function is as follows. Catalyzes the base-exchange of a guanine (G) residue with the queuine precursor 7-aminomethyl-7-deazaguanine (PreQ1) at position 34 (anticodon wobble position) in tRNAs with GU(N) anticodons (tRNA-Asp, -Asn, -His and -Tyr). Catalysis occurs through a double-displacement mechanism. The nucleophile active site attacks the C1' of nucleotide 34 to detach the guanine base from the RNA, forming a covalent enzyme-RNA intermediate. The proton acceptor active site deprotonates the incoming PreQ1, allowing a nucleophilic attack on the C1' of the ribose to form the product. After dissociation, two additional enzymatic reactions on the tRNA convert PreQ1 to queuine (Q), resulting in the hypermodified nucleoside queuosine (7-(((4,5-cis-dihydroxy-2-cyclopenten-1-yl)amino)methyl)-7-deazaguanosine). In Leptothrix cholodnii (strain ATCC 51168 / LMG 8142 / SP-6) (Leptothrix discophora (strain SP-6)), this protein is Queuine tRNA-ribosyltransferase.